The primary structure comprises 399 residues: Pyridinium-3,5-bisthiocarboxylic acid mononucleotide nickel insertion protein (399 aa).

It belongs to the LarC family.

It carries out the reaction Ni(II)-pyridinium-3,5-bisthiocarboxylate mononucleotide = pyridinium-3,5-bisthiocarboxylate mononucleotide + Ni(2+). In terms of biological role, involved in the biosynthesis of a nickel-pincer cofactor ((SCS)Ni(II) pincer complex). Binds Ni(2+), and functions in nickel delivery to pyridinium-3,5-bisthiocarboxylic acid mononucleotide (P2TMN), to form the mature cofactor. Is thus probably required for the activation of nickel-pincer cofactor-dependent enzymes. This is Pyridinium-3,5-bisthiocarboxylic acid mononucleotide nickel insertion protein from Clostridium kluyveri (strain ATCC 8527 / DSM 555 / NBRC 12016 / NCIMB 10680 / K1).